Consider the following 439-residue polypeptide: Protein ABHD8 (439 aa).

2 disordered regions span residues 49-70 and 124-156; these read AGPA…AAQG and PAGS…RPKR. Gly residues predominate over residues 136–145; the sequence is AGSGSGSGSG. The span at 146–156 shows a compositional bias: basic residues; that stretch reads GRRRRARRPKR. The AB hydrolase-1 domain occupies 177 to 279; the sequence is VLFFIHGVGG…HKVIMINGGG (103 aa). Residues Ser252, Asp370, and His398 each act as charge relay system in the active site.

This sequence belongs to the AB hydrolase superfamily. As to quaternary structure, interacts with NLRP3 (via NACHT and LLR domains); this interaction is enhanced in the presence of NLRP3 inflammasome inducers, such as ATP, nigericin, silica, or alum. Interacts with ZDHHC12. (Microbial infection) Interacts with SARS-CoV-2 nucleoprotein N; this interaction disrupts the NLRP3-ABHD8 association, enhancing NLRP3 stability, ultimately leading to increased inflammasome activation.

The protein resides in the cytoplasm. Its function is as follows. Negatively regulates NLRP3-driven inflammation. Promotes NLRP3 degradation through the chaperone-mediated autophagy (CMA) pathway, hence attenuating inflammasome activation and IL1B secretion. Acts by recruiting palmitoyltransferase ZDHHC12 to NLRP3, facilitating NLRP3 palmitoylation and subsequent degradation. This chain is Protein ABHD8, found in Homo sapiens (Human).